The sequence spans 370 residues: 4-hydroxy-3-methylbut-2-en-1-yl diphosphate synthase (flavodoxin) (370 aa).

Cys-270, Cys-273, Cys-305, and Glu-312 together coordinate [4Fe-4S] cluster.

It belongs to the IspG family. [4Fe-4S] cluster serves as cofactor.

The catalysed reaction is (2E)-4-hydroxy-3-methylbut-2-enyl diphosphate + oxidized [flavodoxin] + H2O + 2 H(+) = 2-C-methyl-D-erythritol 2,4-cyclic diphosphate + reduced [flavodoxin]. It functions in the pathway isoprenoid biosynthesis; isopentenyl diphosphate biosynthesis via DXP pathway; isopentenyl diphosphate from 1-deoxy-D-xylulose 5-phosphate: step 5/6. Functionally, converts 2C-methyl-D-erythritol 2,4-cyclodiphosphate (ME-2,4cPP) into 1-hydroxy-2-methyl-2-(E)-butenyl 4-diphosphate. The sequence is that of 4-hydroxy-3-methylbut-2-en-1-yl diphosphate synthase (flavodoxin) from Hahella chejuensis (strain KCTC 2396).